Here is a 458-residue protein sequence, read N- to C-terminus: Argininosuccinate lyase (458 aa).

The protein belongs to the lyase 1 family. Argininosuccinate lyase subfamily.

Its subcellular location is the cytoplasm. The enzyme catalyses 2-(N(omega)-L-arginino)succinate = fumarate + L-arginine. Its pathway is amino-acid biosynthesis; L-arginine biosynthesis; L-arginine from L-ornithine and carbamoyl phosphate: step 3/3. The chain is Argininosuccinate lyase from Salmonella newport (strain SL254).